A 253-amino-acid chain; its full sequence is Isoprenyl transferase (253 aa).

The active site involves Asp-30. Asp-30 contacts Mg(2+). Substrate is bound by residues 31–34 (GNRR), Trp-35, His-51, and 79–81 (STE). Asn-82 acts as the Proton acceptor in catalysis. Substrate-binding positions include Phe-83, Arg-85, Arg-202, and 208 to 210 (RVS). Glu-221 is a Mg(2+) binding site.

The protein belongs to the UPP synthase family. Homodimer. The cofactor is Mg(2+).

Functionally, catalyzes the condensation of isopentenyl diphosphate (IPP) with allylic pyrophosphates generating different type of terpenoids. The chain is Isoprenyl transferase from Chlamydia trachomatis serovar D (strain ATCC VR-885 / DSM 19411 / UW-3/Cx).